The following is a 636-amino-acid chain: DNA mismatch repair protein MutL (636 aa).

The interval 341-420 is disordered; the sequence is APLINKPEQQ…PGAEEYTPEA (80 aa). Basic and acidic residues predominate over residues 348-358; sequence EQQKLDFDQVR.

Belongs to the DNA mismatch repair MutL/HexB family.

Its function is as follows. This protein is involved in the repair of mismatches in DNA. It is required for dam-dependent methyl-directed DNA mismatch repair. May act as a 'molecular matchmaker', a protein that promotes the formation of a stable complex between two or more DNA-binding proteins in an ATP-dependent manner without itself being part of a final effector complex. In Bacillus licheniformis (strain ATCC 14580 / DSM 13 / JCM 2505 / CCUG 7422 / NBRC 12200 / NCIMB 9375 / NCTC 10341 / NRRL NRS-1264 / Gibson 46), this protein is DNA mismatch repair protein MutL.